The primary structure comprises 178 residues: Large ribosomal subunit protein uL6 (178 aa).

Belongs to the universal ribosomal protein uL6 family. Part of the 50S ribosomal subunit.

Functionally, this protein binds to the 23S rRNA, and is important in its secondary structure. It is located near the subunit interface in the base of the L7/L12 stalk, and near the tRNA binding site of the peptidyltransferase center. The chain is Large ribosomal subunit protein uL6 from Helicobacter acinonychis (strain Sheeba).